The primary structure comprises 201 residues: Recombination protein RecR (201 aa).

Residues 60-75 form a C4-type zinc finger; sequence CSCCGNVDTIDPCTVC. Positions 83-178 constitute a Toprim domain; sequence SVIIVVEDVS…KITRLAHGVP (96 aa).

Belongs to the RecR family.

In terms of biological role, may play a role in DNA repair. It seems to be involved in an RecBC-independent recombinational process of DNA repair. It may act with RecF and RecO. In Agrobacterium fabrum (strain C58 / ATCC 33970) (Agrobacterium tumefaciens (strain C58)), this protein is Recombination protein RecR.